Here is a 277-residue protein sequence, read N- to C-terminus: Pantothenate synthetase (277 aa).

26 to 33 (MGNLHEGH) serves as a coordination point for ATP. The active-site Proton donor is His-33. Gln-57 serves as a coordination point for (R)-pantoate. Gln-57 serves as a coordination point for beta-alanine. 144–147 (GKKD) is a binding site for ATP. (R)-pantoate is bound at residue Gln-150. ATP is bound by residues Gly-173 and 181 to 184 (LSSR).

It belongs to the pantothenate synthetase family. As to quaternary structure, homodimer.

Its subcellular location is the cytoplasm. The catalysed reaction is (R)-pantoate + beta-alanine + ATP = (R)-pantothenate + AMP + diphosphate + H(+). Its pathway is cofactor biosynthesis; (R)-pantothenate biosynthesis; (R)-pantothenate from (R)-pantoate and beta-alanine: step 1/1. Catalyzes the condensation of pantoate with beta-alanine in an ATP-dependent reaction via a pantoyl-adenylate intermediate. This chain is Pantothenate synthetase, found in Laribacter hongkongensis (strain HLHK9).